Consider the following 218-residue polypeptide: Adenylate kinase (218 aa).

14 to 19 is an ATP binding site; sequence GAGKGT. Residues 34–63 are NMP; that stretch reads STGDMFRAAIKAGTELGKQAKALMDEGKLV. AMP-binding positions include Thr35, Arg40, 61–63, 89–92, and Gln96; these read KLV and GFPR. The tract at residues 126-163 is LID; that stretch reads GRRVHQASGRSYHIVYNPPKVEGKDDVTGEDLIIRADD. ATP contacts are provided by residues Arg127 and 136-137; that span reads SY. AMP contacts are provided by Arg160 and Arg171. Lys204 provides a ligand contact to ATP.

Belongs to the adenylate kinase family. In terms of assembly, monomer.

Its subcellular location is the cytoplasm. It catalyses the reaction AMP + ATP = 2 ADP. The protein operates within purine metabolism; AMP biosynthesis via salvage pathway; AMP from ADP: step 1/1. Its function is as follows. Catalyzes the reversible transfer of the terminal phosphate group between ATP and AMP. Plays an important role in cellular energy homeostasis and in adenine nucleotide metabolism. This chain is Adenylate kinase, found in Mannheimia succiniciproducens (strain KCTC 0769BP / MBEL55E).